Here is a 372-residue protein sequence, read N- to C-terminus: Cytochrome b (372 aa).

Helical transmembrane passes span 25–45, 69–90, 105–125, and 170–190; these read FGSM…FLAI, WIMQ…YIHI, WLSG…GYVL, and FFAL…IHIM. Residues H75 and H89 each coordinate heme b. The heme b site is built by H174 and H188. Position 193 (H193) interacts with a ubiquinone. A run of 4 helical transmembrane segments spans residues 218–238, 280–300, 312–332, and 339–358; these read HKDI…MTLT, LGGT…PFTH, LTQL…WAAT, and FTMI…IMNP.

It belongs to the cytochrome b family. As to quaternary structure, the cytochrome bc1 complex contains 3 respiratory subunits (MT-CYB, CYC1 and UQCRFS1), 2 core proteins (UQCRC1 and UQCRC2) and probably 6 low-molecular weight proteins. Heme b serves as cofactor.

Its subcellular location is the mitochondrion inner membrane. In terms of biological role, component of the ubiquinol-cytochrome c reductase complex (complex III or cytochrome b-c1 complex) that is part of the mitochondrial respiratory chain. The b-c1 complex mediates electron transfer from ubiquinol to cytochrome c. Contributes to the generation of a proton gradient across the mitochondrial membrane that is then used for ATP synthesis. This Lycodon semicarinatus (Ryukyu odd-tooth snake) protein is Cytochrome b (MT-CYB).